We begin with the raw amino-acid sequence, 1176 residues long: MKNNFFKKTIILLIFLSIFILYSNADEETITTPPGYYGLKRIKRFPHSNIESNNISQTDADLYYPDICAGALPNAEGDLMTFYTFLDANLTLNKFLITKESIYSFMVHSLVILPGGSVTIKRGLLFFSLEEYNSLNIINPAKFPLDPMGYFPGILALGGSLTLIGNYPLIYSAQVLSKTTLRISPPFSSIPGDNINKLYQIKIFSDSNPLGSLCSIIMDSTRTIVNISGCPPIGNEKVMKVAFIKFTIDEMNTGISNRYSVKKIDESIGASIFITGDTKVHIENFFINGDGRTLNEEYNDHKLIFSPNNKNIVTDIIKGSNQRYRNSLYIEFSNNAVIKNCVIFEKDPRRSPIVFFASNVEFTSNIISSYSGSNLIAQFGTENIRSKNNHYFLVPYSRSLNTSAKSMDYGYEGGNGLYSLSPNIKSENDTFIGQLNIFNFNFISNRSSVTSFDRDCYAPCYNDSDSVLSSVQRPVDFYLINPKYFKISNITLFNSTIFNLFVANSNGNQPNTYTINGLVAIGPIVANLDSNFLILKDFIATENFKLDGSVKRLDIINSSIELPLTSKDIIKNVSSLSTNIQNSYLYYPSNDSVEQLKDQIYGSVITPYYYSSPITLDRIKIVSIYPNSPLQVISGLTFNIVIQFRLIYAFQDIIICIFTSDNDSIQNRTVDFNVLSNKCILPVSVGPNKEGSANVRVQIKNSLSSDYLYIIDFPQITVLKTYTFYSGWSMANPDLANQQFIVNGSLFQSGCQTKTDSNCTISENSNYVPNLPNVTSSDELNSLFSSGVTSLNSNEPVIITTAINSNSTISQIQLFFTHVPIDQHASLLSVYIDNQPVYVLEPLQSNQGPTFKNITFKYENTNSLEKINIAFTTRGDIYLTSMAIYSSNIFFIPPIIPDPTAIPDVPANENTLNLLTIVLPICSAVVVASSVMLGRLFYKKKFKKFKSADIENEMTTIEPIETSNSNIENKSESIATPQQRNEQKEIPNKIHPVLKSLVKPKIAPYTLISPLPPLETKTPEALNPHFNEIGCDPINENPEINSDEQIVLPVDTPQISPDSPQHSIPSSSPPPPPLPLPPSTSLKPLKLPIVDSFRTSSFMFRLERSNLIELSDPNNPLRFSSKILDFNLKGLKATLFKEYSNFLLISNISSSTIFVKVILPRDSRTGNVGYNVHEYF.

The N-terminal stretch at 1 to 25 (MKNNFFKKTIILLIFLSIFILYSNA) is a signal peptide. Residues 26 to 913 (DEETITTPPG…DVPANENTLN (888 aa)) lie on the Extracellular side of the membrane. Residues 914-934 (LLTIVLPICSAVVVASSVMLG) traverse the membrane as a helical segment. The Cytoplasmic portion of the chain corresponds to 935–1176 (RLFYKKKFKK…NVGYNVHEYF (242 aa)). Low complexity-rich tracts occupy residues 965-974 (SNIENKSESI) and 1053-1066 (PQIS…SIPS). Disordered regions lie at residues 965–985 (SNIE…EQKE) and 1050–1080 (VDTP…PPST). A compositionally biased stretch (pro residues) spans 1067–1078 (SSPPPPPLPLPP).

Belongs to the GDT family.

The protein localises to the membrane. The polypeptide is Growth-differentiation transition protein 5 (gdt5) (Dictyostelium discoideum (Social amoeba)).